The chain runs to 491 residues: Ketol-acid reductoisomerase (NADP(+)) (491 aa).

Residues 15-208 enclose the KARI N-terminal Rossmann domain; it reads AQLGKCRFMG…GGHRAGVLES (194 aa). NADP(+)-binding positions include 45–48, arginine 68, arginine 76, serine 78, and 108–110; these read CGAQ and DKQ. Residue histidine 132 is part of the active site. An NADP(+)-binding site is contributed by glycine 158. KARI C-terminal knotted domains follow at residues 209 to 344 and 345 to 484; these read SFVA…TAPQ and FEGK…MTDM. Mg(2+) contacts are provided by aspartate 217, glutamate 221, glutamate 389, and glutamate 393. Serine 414 lines the substrate pocket.

The protein belongs to the ketol-acid reductoisomerase family. Mg(2+) serves as cofactor.

The catalysed reaction is (2R)-2,3-dihydroxy-3-methylbutanoate + NADP(+) = (2S)-2-acetolactate + NADPH + H(+). It carries out the reaction (2R,3R)-2,3-dihydroxy-3-methylpentanoate + NADP(+) = (S)-2-ethyl-2-hydroxy-3-oxobutanoate + NADPH + H(+). The protein operates within amino-acid biosynthesis; L-isoleucine biosynthesis; L-isoleucine from 2-oxobutanoate: step 2/4. It functions in the pathway amino-acid biosynthesis; L-valine biosynthesis; L-valine from pyruvate: step 2/4. Its function is as follows. Involved in the biosynthesis of branched-chain amino acids (BCAA). Catalyzes an alkyl-migration followed by a ketol-acid reduction of (S)-2-acetolactate (S2AL) to yield (R)-2,3-dihydroxy-isovalerate. In the isomerase reaction, S2AL is rearranged via a Mg-dependent methyl migration to produce 3-hydroxy-3-methyl-2-ketobutyrate (HMKB). In the reductase reaction, this 2-ketoacid undergoes a metal-dependent reduction by NADPH to yield (R)-2,3-dihydroxy-isovalerate. The sequence is that of Ketol-acid reductoisomerase (NADP(+)) from Salmonella agona (strain SL483).